The chain runs to 414 residues: Probable aminotransferase TAT2 (414 aa).

This sequence belongs to the class-I pyridoxal-phosphate-dependent aminotransferase family. Pyridoxal 5'-phosphate serves as cofactor.

The protein is Probable aminotransferase TAT2 of Arabidopsis thaliana (Mouse-ear cress).